Consider the following 81-residue polypeptide: Sulfur carrier protein TusA (81 aa).

Catalysis depends on C19, which acts as the Cysteine persulfide intermediate.

It belongs to the sulfur carrier protein TusA family.

It localises to the cytoplasm. Sulfur carrier protein which probably makes part of a sulfur-relay system. This chain is Sulfur carrier protein TusA, found in Shewanella frigidimarina (strain NCIMB 400).